The primary structure comprises 1050 residues: Collagen alpha-2(I) chain (1050 aa).

The disordered stretch occupies residues 1–1050 (SGGFDFSFLP…FGYEGDFYRA (1050 aa)). 4-hydroxyproline occurs at positions 10 and 13. Residues 20 to 32 (RYYGVGLGPGPMG) are compositionally biased toward gly residues. 2 stretches are compositionally biased toward low complexity: residues 33 to 46 (LMGPRGPPGASGAP) and 56 to 77 (EPGEPGQTGPAGARGPPGAPGK). 2 positions are modified to 4-hydroxyproline: P40 and P46. Residues 78–92 (AGEDGHPGKPGRPGE) show a composition bias toward basic and acidic residues. K114 carries the post-translational modification 5-hydroxylysine; alternate. A glycan (O-linked (Gal...) hydroxylysine; alternate) is linked at K114. 5 stretches are compositionally biased toward low complexity: residues 161–190 (VGAPGPAGARGSDGSVGPVGPAGPIGSAGP), 236–257 (PGANGLTGAKGAAGLPGVAGAP), 298–311 (EPGSAGPQGPPGSS), 320–338 (NGESGSTGPTGPPGLRGNP), and 355–371 (PAGARGASGPAGVRGPS). P377 and P380 each carry 4-hydroxyproline. Composition is skewed to low complexity over residues 406–425 (LPGIDGRPGPIGPAGARGEA) and 452–467 (AGNRGAPGPDGNNGAQ). Residues 474–483 (GVQGGKGEQG) show a composition bias toward gly residues. Low complexity-rich tracts occupy residues 530-547 (PGESGAVGPSGAIGSRGP), 598-642 (VGTT…PRGS), and 649-669 (VGPAGPNGFAGPAGAAGQPGA). Residues 670–679 (KGERGTKGPK) are compositionally biased toward basic and acidic residues. The segment covering 687-697 (PTGPVGSAGPA) has biased composition (low complexity). Residues 707–716 (GSRGDGGPPG) are compositionally biased toward gly residues. Over residues 718-727 (TGFPGAAGRT) the composition is skewed to low complexity. The segment covering 764 to 773 (GETGAGGPPG) has biased composition (gly residues). Composition is skewed to low complexity over residues 781–808 (SGEPGTAGPPGTAGPQGLLGAPGILGLP), 816–841 (LPGVAGAVGEPGPLGIAGPPGARGPS), 881–903 (YAGNAGPVGAAGAPGPHGTVGPA), and 911–926 (EPGPVGSVGPVGALGP). Residues 936–947 (RGDKGEPGDKGP) are compositionally biased toward basic and acidic residues. The segment covering 1020–1032 (SGPPGPPGPPGPP) has biased composition (pro residues).

It belongs to the fibrillar collagen family. As to quaternary structure, trimers of one alpha 2(I) and two alpha 1(I) chains. Interacts (via C-terminus) with TMEM131 (via PapD-L domain); the interaction is direct and is involved in assembly and TRAPPIII ER-to-Golgi transport complex-dependent secretion of collagen. Prolines at the third position of the tripeptide repeating unit (G-X-Y) are hydroxylated in some or all of the chains. As to expression, expressed in bones.

Its subcellular location is the secreted. It localises to the extracellular space. The protein resides in the extracellular matrix. In terms of biological role, type I collagen is a member of group I collagen (fibrillar forming collagen). This Megatherium americanum (Giant ground sloth) protein is Collagen alpha-2(I) chain.